A 62-amino-acid polypeptide reads, in one-letter code: Venom peptide 6 (62 aa).

The first 26 residues, 1–26 (MKSTSVFILFAGIAIMACLQMTGTEA), serve as a signal peptide directing secretion. 3 AXPX repeats span residues 26–29 (AAPS), 30–33 (ASPN), and 40–43 (ADPD). A propeptide spanning residues 27-46 (APSASPNPTPVARADPDPEA) is cleaved from the precursor.

It belongs to the MCD family. Expressed by the venom gland.

Its subcellular location is the secreted. It is found in the target cell membrane. Antimicrobial peptide with strong activity against the fungus B.cinerea (MIC=5 uM) and the Gram-positive bacterium S.aureus (MIC=50 uM), and no activity against C.albicans (MIC&gt;200 uM), and the Gram-negative bacterium E.coli (MIC&gt;200 uM). Shows cytolytic activity against insect cell lines. Has no hemolytic activity against human erythrocytes. In vivo, peptide injection in the vicinity of the head and thorax of lepidopteran larvae induces feeding disorder that lasts one or two days before recovering. The chain is Venom peptide 6 from Eumenes pomiformis (Potter wasp).